A 405-amino-acid chain; its full sequence is Acetate kinase (405 aa).

Mg(2+) is bound at residue Asn7. Lys14 serves as a coordination point for ATP. Arg92 is a substrate binding site. Catalysis depends on Asp149, which acts as the Proton donor/acceptor. Residues 209–213 (HLGNG) and 284–286 (DMR) contribute to the ATP site. Glu389 provides a ligand contact to Mg(2+).

The protein belongs to the acetokinase family. As to quaternary structure, homodimer. Mg(2+) serves as cofactor. Mn(2+) is required as a cofactor.

The protein resides in the cytoplasm. It catalyses the reaction acetate + ATP = acetyl phosphate + ADP. It functions in the pathway metabolic intermediate biosynthesis; acetyl-CoA biosynthesis; acetyl-CoA from acetate: step 1/2. Catalyzes the formation of acetyl phosphate from acetate and ATP. Can also catalyze the reverse reaction. This Borreliella burgdorferi (strain ZS7) (Borrelia burgdorferi) protein is Acetate kinase.